The primary structure comprises 238 residues: MRPSGRAADQMRPIAIETNFTIHAEGSVLVSFGNTRVLVTASVEEKVPPFLRGKGQGWVTAEYGMLPRATHTRGSREAAKGKQSGRTQEIQRLIGRSLRAVVDMQKLGERQIVIDCDVIQADGGTRTASISGAWVALRLAVDKLIEAKQLTEDPIVDSVAAISCGIYKGTPVLDLDYDEDSVAEADGNFVLTGKGQIVEVQASAEGATYDEEGLLRLLRLARIGCGEIFAAQAKAVGR.

Phosphate contacts are provided by residues Arg-86 and 124–126 (GTR).

This sequence belongs to the RNase PH family. In terms of assembly, homohexameric ring arranged as a trimer of dimers.

The catalysed reaction is tRNA(n+1) + phosphate = tRNA(n) + a ribonucleoside 5'-diphosphate. In terms of biological role, phosphorolytic 3'-5' exoribonuclease that plays an important role in tRNA 3'-end maturation. Removes nucleotide residues following the 3'-CCA terminus of tRNAs; can also add nucleotides to the ends of RNA molecules by using nucleoside diphosphates as substrates, but this may not be physiologically important. Probably plays a role in initiation of 16S rRNA degradation (leading to ribosome degradation) during starvation. The protein is Ribonuclease PH of Sphingopyxis alaskensis (strain DSM 13593 / LMG 18877 / RB2256) (Sphingomonas alaskensis).